Consider the following 58-residue polypeptide: Small ribosomal subunit protein bS21 (58 aa).

Basic and acidic residues predominate over residues I32–S42. The disordered stretch occupies residues I32–K58. Positions V43–K58 are enriched in basic residues.

Belongs to the bacterial ribosomal protein bS21 family.

The sequence is that of Small ribosomal subunit protein bS21 from Lachnoclostridium phytofermentans (strain ATCC 700394 / DSM 18823 / ISDg) (Clostridium phytofermentans).